The primary structure comprises 258 residues: MFSYISNYLISVEPLGFILYYTSLYIWIPSLLQTIFNNNEKQLSYSSKIEWTNKIVATISSIVSFSLSCYCIYNKKSWVTNEMTSTCALSDFILKFISFYFLFDALHLIIYYKQLFDWPIIIHHLVVGILSYVYIGLYYKKVHLTLLYFLLFEITNPFIHMKWFLKDLKLENHILYSINGFMMAFFFIFIRDIYVPIKVVKIYINGYTELNSIANTIIFFCFPIITILNLFWTYLVIKGILKHLSRTKTSTPQIKKKN.

7 helical membrane-spanning segments follow: residues 8 to 28 (YLISVEPLGFILYYTSLYIWI), 49 to 71 (IEWTNKIVATISSIVSFSLSCYC), 92 to 112 (FILKFISFYFLFDALHLIIYY), 118 to 138 (WPIIIHHLVVGILSYVYIGLY), 144 to 164 (LTLLYFLLFEITNPFIHMKWF), 170 to 190 (LENHILYSINGFMMAFFFIFI), and 217 to 237 (IIFFCFPIITILNLFWTYLVI). In terms of domain architecture, TLC spans 46 to 245 (SSKIEWTNKI…VIKGILKHLS (200 aa)).

The protein belongs to the TLCD4 family.

The protein resides in the membrane. This chain is TLC domain-containing protein 4 A (tlcd4a), found in Dictyostelium discoideum (Social amoeba).